The sequence spans 61 residues: UPF0434 protein PFLU_3771 (61 aa).

Belongs to the UPF0434 family.

The protein is UPF0434 protein PFLU_3771 of Pseudomonas fluorescens (strain SBW25).